The following is a 311-amino-acid chain: Mediator of RNA polymerase II transcription subunit 27 (311 aa).

S132 bears the Phosphoserine mark. Residue K134 is modified to N6-methyllysine.

Belongs to the Mediator complex subunit 27 family. As to quaternary structure, component of the Mediator complex, which is composed of MED1, MED4, MED6, MED7, MED8, MED9, MED10, MED11, MED12, MED13, MED13L, MED14, MED15, MED16, MED17, MED18, MED19, MED20, MED21, MED22, MED23, MED24, MED25, MED26, MED27, MED29, MED30, MED31, CCNC, CDK8 and CDC2L6/CDK11. The MED12, MED13, CCNC and CDK8 subunits form a distinct module termed the CDK8 module. Mediator containing the CDK8 module is less active than Mediator lacking this module in supporting transcriptional activation. Individual preparations of the Mediator complex lacking one or more distinct subunits have been variously termed ARC, CRSP, DRIP, PC2, SMCC and TRAP.

The protein resides in the nucleus. Its function is as follows. Component of the Mediator complex, a coactivator involved in the regulated transcription of nearly all RNA polymerase II-dependent genes. Mediator functions as a bridge to convey information from gene-specific regulatory proteins to the basal RNA polymerase II transcription machinery. Mediator is recruited to promoters by direct interactions with regulatory proteins and serves as a scaffold for the assembly of a functional preinitiation complex with RNA polymerase II and the general transcription factors. The chain is Mediator of RNA polymerase II transcription subunit 27 (MED27) from Bos taurus (Bovine).